We begin with the raw amino-acid sequence, 332 residues long: MDPIREGEVAHEGDSVYTLNDFTKLEKIGEGTYGVVYKGKNRRTNAMVAMKKIRLESEDEGVPSTAVREISLLKELQHPNVVGLEAVIMQENRLFLIFEFLSFDLKRYMDQLGKDEYLPLETLKSYTFQILQAMCFCHQRRVIHRDLKPQNLLVDNNGAIKLADFGLARAIGIPIRVYTHEVVTLWYRAPEILMGAQRYSMGVDMWSIGCIFAEMATKKPLFQGDSEIDELFRIFRVLGTPTELEWNGVESLPDYKATFPKWRENFLRDKFYDKKTGKHLLDDTAFSLLEGLLIYDPSLRLNAKKALVHPYFDNMDTSKLPAGNYRGELELF.

The 291-residue stretch at 22–312 (FTKLEKIGEG…AKKALVHPYF (291 aa)) folds into the Protein kinase domain. ATP-binding positions include 28–36 (IGEGTYGVV) and Lys51. Thr32 is subject to Phosphothreonine. Tyr33 carries the post-translational modification Phosphotyrosine. The active-site Proton acceptor is the Asp146.

This sequence belongs to the protein kinase superfamily. CMGC Ser/Thr protein kinase family. CDC2/CDKX subfamily. As to quaternary structure, forms a stable but non-covalent complex with a regulatory subunit and with a cyclin. Interacts with cks-1. In terms of processing, phosphorylated.

The protein resides in the nucleus. Its subcellular location is the cytoplasm. The protein localises to the cytoskeleton. It is found in the microtubule organizing center. It localises to the centrosome. The protein resides in the chromosome. The enzyme catalyses L-seryl-[protein] + ATP = O-phospho-L-seryl-[protein] + ADP + H(+). It carries out the reaction L-threonyl-[protein] + ATP = O-phospho-L-threonyl-[protein] + ADP + H(+). The catalysed reaction is [DNA-directed RNA polymerase] + ATP = phospho-[DNA-directed RNA polymerase] + ADP + H(+). Phosphorylation both activates and inactivates the enzyme depending on the site of phosphorylation. Functionally, plays a key role in the control of the eukaryotic cell cycle. Required for entry into S-phase and mitosis. Acts as a component of the kinase complex that phosphorylates the repetitive C-terminus of RNA polymerase II. May function in concert with npp-16 to arrest prophase blastomeres in response to anoxia. The protein is Cyclin-dependent kinase 1 (cdk-1) of Caenorhabditis elegans.